We begin with the raw amino-acid sequence, 301 residues long: Glycine--tRNA ligase alpha subunit (301 aa).

It belongs to the class-II aminoacyl-tRNA synthetase family. As to quaternary structure, tetramer of two alpha and two beta subunits.

The protein resides in the cytoplasm. It carries out the reaction tRNA(Gly) + glycine + ATP = glycyl-tRNA(Gly) + AMP + diphosphate. This chain is Glycine--tRNA ligase alpha subunit, found in Shewanella baltica (strain OS223).